Reading from the N-terminus, the 315-residue chain is Tyrosine recombinase XerC (315 aa).

Residues 13–104 (ADLAAAREEW…GVRSLLRHLE (92 aa)) form the Core-binding (CB) domain. The Tyr recombinase domain occupies 125-309 (SLPKPLTADD…DTQRLLEVYD (185 aa)). Residues R168, K193, H261, R264, and H287 contribute to the active site. Y296 serves as the catalytic O-(3'-phospho-DNA)-tyrosine intermediate.

This sequence belongs to the 'phage' integrase family. XerC subfamily. In terms of assembly, forms a cyclic heterotetrameric complex composed of two molecules of XerC and two molecules of XerD.

Its subcellular location is the cytoplasm. In terms of biological role, site-specific tyrosine recombinase, which acts by catalyzing the cutting and rejoining of the recombining DNA molecules. The XerC-XerD complex is essential to convert dimers of the bacterial chromosome into monomers to permit their segregation at cell division. It also contributes to the segregational stability of plasmids. The chain is Tyrosine recombinase XerC from Brucella melitensis biotype 1 (strain ATCC 23456 / CCUG 17765 / NCTC 10094 / 16M).